A 228-amino-acid chain; its full sequence is UPF0758 protein str1465 (228 aa).

The region spanning 103 to 225 (QIMSSQQVAR…YYSFREERED (123 aa)) is the MPN domain. Residues His174, His176, and Asp187 each coordinate Zn(2+). The JAMM motif motif lies at 174–187 (HNHPSGEAYPSRND).

Belongs to the UPF0758 family.

This chain is UPF0758 protein str1465, found in Streptococcus thermophilus (strain CNRZ 1066).